Here is a 145-residue protein sequence, read N- to C-terminus: 3-hydroxyacyl-[acyl-carrier-protein] dehydratase FabZ (145 aa).

The active site involves His49.

This sequence belongs to the thioester dehydratase family. FabZ subfamily.

It localises to the cytoplasm. The catalysed reaction is a (3R)-hydroxyacyl-[ACP] = a (2E)-enoyl-[ACP] + H2O. Involved in unsaturated fatty acids biosynthesis. Catalyzes the dehydration of short chain beta-hydroxyacyl-ACPs and long chain saturated and unsaturated beta-hydroxyacyl-ACPs. This chain is 3-hydroxyacyl-[acyl-carrier-protein] dehydratase FabZ, found in Rickettsia typhi (strain ATCC VR-144 / Wilmington).